A 268-amino-acid chain; its full sequence is MQKTNKFLKIGNKEFKSRLLVGTGKYSSLEVMQKSLINTKCEIVTVAVRRVQGLEHGHKGLMESIDWKRIWMLPNTAGCSNAEEAIRIARLGRELAKLAGQETNNFVKLEVIPDKKYLLPDPIGTLKAAEQLVKEGFTVLPYINSDPLIAKQLEEIGCATVMPLGSPIGSAQGIRNAANIAMIIAESRIPIIIDAGIGVPSEAAQALEMGADGVLINSAIALAENPILMAQAFSKATEAGRDGYLSGRLKENPLASPSSPLDGVISNN.

Lys-108 serves as the catalytic Schiff-base intermediate with DXP. Residues Gly-169, 195-196 (AG), and 217-218 (NS) contribute to the 1-deoxy-D-xylulose 5-phosphate site. The interval 248-268 (RLKENPLASPSSPLDGVISNN) is disordered. Positions 255 to 268 (ASPSSPLDGVISNN) are enriched in polar residues.

It belongs to the ThiG family. Homotetramer. Forms heterodimers with either ThiH or ThiS.

It localises to the cytoplasm. The enzyme catalyses [ThiS sulfur-carrier protein]-C-terminal-Gly-aminoethanethioate + 2-iminoacetate + 1-deoxy-D-xylulose 5-phosphate = [ThiS sulfur-carrier protein]-C-terminal Gly-Gly + 2-[(2R,5Z)-2-carboxy-4-methylthiazol-5(2H)-ylidene]ethyl phosphate + 2 H2O + H(+). Its pathway is cofactor biosynthesis; thiamine diphosphate biosynthesis. In terms of biological role, catalyzes the rearrangement of 1-deoxy-D-xylulose 5-phosphate (DXP) to produce the thiazole phosphate moiety of thiamine. Sulfur is provided by the thiocarboxylate moiety of the carrier protein ThiS. In vitro, sulfur can be provided by H(2)S. The chain is Thiazole synthase from Prochlorococcus marinus (strain NATL2A).